We begin with the raw amino-acid sequence, 226 residues long: ATP-dependent Clp protease proteolytic subunit 2 (226 aa).

Catalysis depends on Ser-118, which acts as the Nucleophile. His-143 is an active-site residue.

It belongs to the peptidase S14 family. In terms of assembly, fourteen ClpP subunits assemble into 2 heptameric rings which stack back to back to give a disk-like structure with a central cavity, resembling the structure of eukaryotic proteasomes.

Its subcellular location is the cytoplasm. It carries out the reaction Hydrolysis of proteins to small peptides in the presence of ATP and magnesium. alpha-casein is the usual test substrate. In the absence of ATP, only oligopeptides shorter than five residues are hydrolyzed (such as succinyl-Leu-Tyr-|-NHMec, and Leu-Tyr-Leu-|-Tyr-Trp, in which cleavage of the -Tyr-|-Leu- and -Tyr-|-Trp bonds also occurs).. Its function is as follows. Cleaves peptides in various proteins in a process that requires ATP hydrolysis. Has a chymotrypsin-like activity. Plays a major role in the degradation of misfolded proteins. The polypeptide is ATP-dependent Clp protease proteolytic subunit 2 (Synechocystis sp. (strain ATCC 27184 / PCC 6803 / Kazusa)).